The chain runs to 380 residues: uncharacterized protein (380 aa).

This is an uncharacterized protein from Methanocaldococcus jannaschii (strain ATCC 43067 / DSM 2661 / JAL-1 / JCM 10045 / NBRC 100440) (Methanococcus jannaschii).